A 61-amino-acid polypeptide reads, in one-letter code: Metallothionein-2 (61 aa).

Met-1 bears the N-acetylmethionine mark. The tract at residues 1 to 29 is beta; it reads MDPNCSCATDGSCSCAGSCKCKECKCTTC. 18 residues coordinate a divalent metal cation: Cys-5, Cys-7, Cys-13, Cys-15, Cys-19, Cys-21, Cys-24, Cys-26, Cys-29, Cys-33, Cys-34, Cys-36, Cys-37, Cys-41, Cys-44, Cys-48, Cys-50, and Cys-57. Residues 30–61 are alpha; that stretch reads KKSCCSCCPVGCAKCSQGCVCKEASDKCSCCA. Position 58 is a phosphoserine (Ser-58). A divalent metal cation-binding residues include Cys-59 and Cys-60.

This sequence belongs to the metallothionein superfamily. Type 1 family.

In terms of biological role, metallothioneins have a high content of cysteine residues that bind various heavy metals; these proteins are transcriptionally regulated by both heavy metals and glucocorticoids. This chain is Metallothionein-2 (MT2), found in Cricetulus griseus (Chinese hamster).